A 289-amino-acid polypeptide reads, in one-letter code: Rhodopsin (289 aa).

Residues 1–7 are Extracellular-facing; that stretch reads YLVSPAA. A helical membrane pass occupies residues 8–32; the sequence is YAALGAYMFLLILIGFPVNFLTLYV. Residues 33 to 44 lie on the Cytoplasmic side of the membrane; sequence TLEHKKLRTPLN. A helical transmembrane segment spans residues 45-67; that stretch reads YILLNLAVADLFMVLGGFTTTMY. At 68–81 the chain is on the extracellular side; it reads TSMHGYFVLGRLGC. Cysteine 81 and cysteine 158 form a disulfide bridge. The helical transmembrane segment at 82 to 104 threads the bilayer; the sequence is NLEGFFATLGGEIALWSLVVLAI. The short motif at 105–107 is the 'Ionic lock' involved in activated form stabilization element; it reads ERW. Over 105–123 the chain is Cytoplasmic; that stretch reads ERWIVVCKPISKFRFTEDN. A helical transmembrane segment spans residues 124 to 144; that stretch reads AIMGLAFSWVMALACAVPPLV. Residues 145–173 are Extracellular-facing; the sequence is GWLRYIPEGMQCTCGVDYYTRAEGFDNES. Residue asparagine 171 is glycosylated (N-linked (GlcNAc...) asparagine). Residues 174 to 195 form a helical membrane-spanning segment; the sequence is FVIYMFIVHFLIPLSVIFFCYG. The Cytoplasmic segment spans residues 196-223; sequence RLLCAVKEAAAAQQESETTQRAEKEVSR. The helical transmembrane segment at 224–245 threads the bilayer; sequence MVVIMVIGFLVCWLPYASVAWW. Residues 246–257 are Extracellular-facing; sequence IFCNQGSDFGPI. The helical transmembrane segment at 258–279 threads the bilayer; it reads FMTLPSFFAKRPAIYNPMIYIC. Lysine 267 is subject to N6-(retinylidene)lysine. The Cytoplasmic portion of the chain corresponds to 280–289; that stretch reads MNKQFRHCMI.

The protein belongs to the G-protein coupled receptor 1 family. Opsin subfamily. Phosphorylated on some or all of the serine and threonine residues present in the C-terminal region. Post-translationally, contains one covalently linked retinal chromophore.

It localises to the membrane. Its subcellular location is the cell projection. The protein resides in the cilium. The protein localises to the photoreceptor outer segment. In terms of biological role, photoreceptor required for image-forming vision at low light intensity. While most salt water fish species use retinal as chromophore, most freshwater fish use 3-dehydroretinal, or a mixture of retinal and 3-dehydroretinal. Light-induced isomerization of 11-cis to all-trans retinal triggers a conformational change that activates signaling via G-proteins. Subsequent receptor phosphorylation mediates displacement of the bound G-protein alpha subunit by arrestin and terminates signaling. The polypeptide is Rhodopsin (rho) (Batrachocottus nikolskii (Fat sculpin)).